A 329-amino-acid polypeptide reads, in one-letter code: Probable CTD kinase subunit alpha homolog (329 aa).

The region spanning 22–297 (YEKIRIIGEG…VEQVVGSKYF (276 aa)) is the Protein kinase domain. ATP contacts are provided by residues 28–36 (IGEGTFGQV) and Lys49. Asp139 serves as the catalytic Proton acceptor.

It belongs to the protein kinase superfamily. CMGC Ser/Thr protein kinase family. CDC2/CDKX subfamily. As to quaternary structure, component of the CTDK-I complex.

The protein localises to the nucleus. It localises to the nucleolus. The catalysed reaction is [DNA-directed RNA polymerase] + ATP = phospho-[DNA-directed RNA polymerase] + ADP + H(+). In terms of biological role, catalytic subunit of the CTDK-I complex, which hyperphosphorylates the C-terminal heptapeptide repeat domain (CTD) of the largest RNA polymerase II subunit. Involved in RNA polymerase II transcriptional elongation and pre-mRNA 3'-end processing. This is Probable CTD kinase subunit alpha homolog (CTK1) from Encephalitozoon cuniculi (strain GB-M1) (Microsporidian parasite).